The primary structure comprises 195 residues: Probable molybdenum cofactor guanylyltransferase (195 aa).

GTP is bound by residues 9-11 (LAG), Lys21, Asp69, and Asp100. Asp100 contributes to the Mg(2+) binding site.

Belongs to the MobA family. Mg(2+) is required as a cofactor.

It is found in the cytoplasm. The enzyme catalyses Mo-molybdopterin + GTP + H(+) = Mo-molybdopterin guanine dinucleotide + diphosphate. In terms of biological role, transfers a GMP moiety from GTP to Mo-molybdopterin (Mo-MPT) cofactor (Moco or molybdenum cofactor) to form Mo-molybdopterin guanine dinucleotide (Mo-MGD) cofactor. This chain is Probable molybdenum cofactor guanylyltransferase, found in Geobacillus sp. (strain WCH70).